The sequence spans 333 residues: Quinolinate synthase (333 aa).

Iminosuccinate is bound by residues His-41 and Ser-58. Cys-103 contacts [4Fe-4S] cluster. Iminosuccinate-binding positions include 129–131 (YIN) and Ser-146. Cys-189 is a binding site for [4Fe-4S] cluster. Iminosuccinate contacts are provided by residues 215-217 (HPE) and Thr-232. Cys-282 is a [4Fe-4S] cluster binding site.

The protein belongs to the quinolinate synthase family. Type 2 subfamily. [4Fe-4S] cluster is required as a cofactor.

The protein localises to the cytoplasm. It carries out the reaction iminosuccinate + dihydroxyacetone phosphate = quinolinate + phosphate + 2 H2O + H(+). The protein operates within cofactor biosynthesis; NAD(+) biosynthesis; quinolinate from iminoaspartate: step 1/1. Functionally, catalyzes the condensation of iminoaspartate with dihydroxyacetone phosphate to form quinolinate. In Prochlorococcus marinus (strain MIT 9303), this protein is Quinolinate synthase.